The sequence spans 405 residues: Bestrophin homolog 14 (405 aa).

Transmembrane regions (helical) follow at residues leucine 28 to glutamate 48, isoleucine 63 to alanine 83, leucine 223 to glycine 243, and glutamate 256 to leucine 276.

It belongs to the anion channel-forming bestrophin (TC 1.A.46) family. Calcium-sensitive chloride channel subfamily.

It is found in the membrane. The sequence is that of Bestrophin homolog 14 (best-14) from Caenorhabditis elegans.